A 366-amino-acid chain; its full sequence is D-alanine--D-alanine ligase (366 aa).

The 207-residue stretch at 140–346 folds into the ATP-grasp domain; that stretch reads KALFAQSDLP…YGELLSRLVD (207 aa). 173-228 lines the ATP pocket; it reads EDRLGYPCFVKPANMGSSVGISKATNRAELVAAFDDAVRYDRKLIVEKGINVREIE. Residues D299, E313, and N315 each coordinate Mg(2+).

It belongs to the D-alanine--D-alanine ligase family. The cofactor is Mg(2+). Mn(2+) is required as a cofactor.

The protein resides in the cytoplasm. The enzyme catalyses 2 D-alanine + ATP = D-alanyl-D-alanine + ADP + phosphate + H(+). It functions in the pathway cell wall biogenesis; peptidoglycan biosynthesis. Its function is as follows. Cell wall formation. In Heliobacterium modesticaldum (strain ATCC 51547 / Ice1), this protein is D-alanine--D-alanine ligase.